We begin with the raw amino-acid sequence, 258 residues long: Ribosome maturation factor RimP (258 aa).

Disordered stretches follow at residues 48–88 and 212–258; these read PQRP…PTSA and IFKK…AEND. Residues 215–224 show a composition bias toward basic residues; it reads KPQKPGKKPG.

The protein belongs to the RimP family.

Its subcellular location is the cytoplasm. Functionally, required for maturation of 30S ribosomal subunits. This is Ribosome maturation factor RimP from Desulfovibrio desulfuricans (strain ATCC 27774 / DSM 6949 / MB).